Reading from the N-terminus, the 305-residue chain is Tyrosine recombinase XerC (305 aa).

In terms of domain architecture, Core-binding (CB) spans 4–95; sequence TSIQELIDKW…AVKNFYRFLE (92 aa). The Tyr recombinase domain occupies 116–298; the sequence is LLPKALSEDD…SIKHLEAVYT (183 aa). Residues R159, K182, H250, R253, and H276 contribute to the active site. Catalysis depends on Y285, which acts as the O-(3'-phospho-DNA)-tyrosine intermediate.

This sequence belongs to the 'phage' integrase family. XerC subfamily. In terms of assembly, forms a cyclic heterotetrameric complex composed of two molecules of XerC and two molecules of XerD.

Its subcellular location is the cytoplasm. Site-specific tyrosine recombinase, which acts by catalyzing the cutting and rejoining of the recombining DNA molecules. The XerC-XerD complex is essential to convert dimers of the bacterial chromosome into monomers to permit their segregation at cell division. It also contributes to the segregational stability of plasmids. The polypeptide is Tyrosine recombinase XerC (Rickettsia felis (strain ATCC VR-1525 / URRWXCal2) (Rickettsia azadi)).